Here is a 957-residue protein sequence, read N- to C-terminus: Glycine dehydrogenase (decarboxylating) (957 aa).

Lysine 708 carries the N6-(pyridoxal phosphate)lysine modification.

The protein belongs to the GcvP family. The glycine cleavage system is composed of four proteins: P, T, L and H. Pyridoxal 5'-phosphate is required as a cofactor.

The catalysed reaction is N(6)-[(R)-lipoyl]-L-lysyl-[glycine-cleavage complex H protein] + glycine + H(+) = N(6)-[(R)-S(8)-aminomethyldihydrolipoyl]-L-lysyl-[glycine-cleavage complex H protein] + CO2. Functionally, the glycine cleavage system catalyzes the degradation of glycine. The P protein binds the alpha-amino group of glycine through its pyridoxal phosphate cofactor; CO(2) is released and the remaining methylamine moiety is then transferred to the lipoamide cofactor of the H protein. The chain is Glycine dehydrogenase (decarboxylating) from Salmonella newport (strain SL254).